The sequence spans 328 residues: Tetraacyldisaccharide 4'-kinase (328 aa).

55 to 62 (TAGGNGKT) contacts ATP.

This sequence belongs to the LpxK family.

The enzyme catalyses a lipid A disaccharide + ATP = a lipid IVA + ADP + H(+). It functions in the pathway glycolipid biosynthesis; lipid IV(A) biosynthesis; lipid IV(A) from (3R)-3-hydroxytetradecanoyl-[acyl-carrier-protein] and UDP-N-acetyl-alpha-D-glucosamine: step 6/6. Transfers the gamma-phosphate of ATP to the 4'-position of a tetraacyldisaccharide 1-phosphate intermediate (termed DS-1-P) to form tetraacyldisaccharide 1,4'-bis-phosphate (lipid IVA). The sequence is that of Tetraacyldisaccharide 4'-kinase from Escherichia coli O17:K52:H18 (strain UMN026 / ExPEC).